We begin with the raw amino-acid sequence, 408 residues long: uncharacterized protein (408 aa).

Residues 49–77 (PRSSPEVQRKATAGENSEVGSPESSLSTS) are disordered. A compositionally biased stretch (polar residues) spans 62 to 77 (GENSEVGSPESSLSTS). The region spanning 124–170 (SFEFMQLPDTDICQIMSFLDAQSLLNLSQTCSHLRQLCLAHEDNAGK) is the F-box domain.

This is an uncharacterized protein from Caenorhabditis elegans.